A 361-amino-acid polypeptide reads, in one-letter code: Queuine tRNA-ribosyltransferase (361 aa).

The active-site Proton acceptor is Asp92. Residues 92–96 (DSGGF), Asp146, Gln189, and Gly216 contribute to the substrate site. The RNA binding stretch occupies residues 247–253 (GVGKPAD). Asp266 functions as the Nucleophile in the catalytic mechanism. Residues 271 to 275 (TRSGR) are RNA binding; important for wobble base 34 recognition. Zn(2+)-binding residues include Cys304, Cys306, Cys309, and His335.

This sequence belongs to the queuine tRNA-ribosyltransferase family. Homodimer. Within each dimer, one monomer is responsible for RNA recognition and catalysis, while the other monomer binds to the replacement base PreQ1. Zn(2+) serves as cofactor.

The catalysed reaction is 7-aminomethyl-7-carbaguanine + guanosine(34) in tRNA = 7-aminomethyl-7-carbaguanosine(34) in tRNA + guanine. It functions in the pathway tRNA modification; tRNA-queuosine biosynthesis. Functionally, catalyzes the base-exchange of a guanine (G) residue with the queuine precursor 7-aminomethyl-7-deazaguanine (PreQ1) at position 34 (anticodon wobble position) in tRNAs with GU(N) anticodons (tRNA-Asp, -Asn, -His and -Tyr). Catalysis occurs through a double-displacement mechanism. The nucleophile active site attacks the C1' of nucleotide 34 to detach the guanine base from the RNA, forming a covalent enzyme-RNA intermediate. The proton acceptor active site deprotonates the incoming PreQ1, allowing a nucleophilic attack on the C1' of the ribose to form the product. After dissociation, two additional enzymatic reactions on the tRNA convert PreQ1 to queuine (Q), resulting in the hypermodified nucleoside queuosine (7-(((4,5-cis-dihydroxy-2-cyclopenten-1-yl)amino)methyl)-7-deazaguanosine). This is Queuine tRNA-ribosyltransferase from Rickettsia bellii (strain OSU 85-389).